The following is a 469-amino-acid chain: Dihydrolipoyl dehydrogenase (469 aa).

FAD contacts are provided by residues 34–42, Lys-51, and Gly-114; that span reads EKQYWGGVC. Cys-42 and Cys-47 are joined by a disulfide. NAD(+)-binding positions include 179-183, Glu-202, and 269-272; these read GAGAI and SVGF. Residues Asp-312 and Ala-320 each contribute to the FAD site. His-448 (proton acceptor) is an active-site residue.

The protein belongs to the class-I pyridine nucleotide-disulfide oxidoreductase family. In terms of assembly, homodimer. Part of an unusual ODH/PDH supercomplex, consisting of AceE (E1), AceF (E2), and Lpd (E3) together with OdhA (E1+E2). Requires FAD as cofactor.

The protein resides in the cytoplasm. It catalyses the reaction N(6)-[(R)-dihydrolipoyl]-L-lysyl-[protein] + NAD(+) = N(6)-[(R)-lipoyl]-L-lysyl-[protein] + NADH + H(+). The protein operates within carbohydrate metabolism; tricarboxylic acid cycle; succinyl-CoA from 2-oxoglutarate (dehydrogenase route): step 1/1. In terms of biological role, lipoamide dehydrogenase is an essential component of the pyruvate dehydrogenase (PDH) and 2-oxoglutarate dehydrogenase (ODH) complexes. Catalyzes the reoxidation of dihydrolipoyl groups which are covalently attached to the lipoate acyltransferase components (E2) of the complexes. Also catalyzes a reversible NADH:NAD(+) transhydrogenation, and is able to transfer electrons from NADH to various redox-active compounds and quinones. May be involved in quinone redox cycling in C.glutamicum. This chain is Dihydrolipoyl dehydrogenase (lpd), found in Corynebacterium glutamicum (strain ATCC 13032 / DSM 20300 / JCM 1318 / BCRC 11384 / CCUG 27702 / LMG 3730 / NBRC 12168 / NCIMB 10025 / NRRL B-2784 / 534).